The sequence spans 171 residues: Disulfide bond formation protein B (171 aa).

At 1-8 the chain is on the cytoplasmic side; it reads MRLSYRLV. Residues 9 to 25 traverse the membrane as a helical segment; sequence SGLLVLASIVGMSFALY. Topologically, residues 26–43 are periplasmic; it reads LEHVKGLEPCPLCIFQRV. Cysteine 35 and cysteine 38 are joined by a disulfide. The helical transmembrane segment at 44-60 threads the bilayer; sequence GLMAMGFVALIAFLHNP. At 61–67 the chain is on the cytoplasmic side; it reads VSNAIKR. A helical transmembrane segment spans residues 68-85; that stretch reads FYAFLAGVAILWSVGVAG. Over 86–142 the chain is Periplasmic; that stretch reads RHVWLQHLPPDQVPSCGPGLNYLIDALPMKTVLQEVLSGSGECAAIDWTFLGQSLPV. Cysteine 101 and cysteine 128 are oxidised to a cystine. A helical transmembrane segment spans residues 143–161; that stretch reads WSLAYFLLLLLVCLWQLFR. Residues 162–171 lie on the Cytoplasmic side of the membrane; sequence FYPVFKTAKK.

It belongs to the DsbB family.

It localises to the cell inner membrane. Functionally, required for disulfide bond formation in some periplasmic proteins. Acts by oxidizing the DsbA protein. The protein is Disulfide bond formation protein B of Acinetobacter baumannii (strain ATCC 17978 / DSM 105126 / CIP 53.77 / LMG 1025 / NCDC KC755 / 5377).